The chain runs to 172 residues: SsrA-binding protein (172 aa).

Belongs to the SmpB family.

The protein localises to the cytoplasm. In terms of biological role, required for rescue of stalled ribosomes mediated by trans-translation. Binds to transfer-messenger RNA (tmRNA), required for stable association of tmRNA with ribosomes. tmRNA and SmpB together mimic tRNA shape, replacing the anticodon stem-loop with SmpB. tmRNA is encoded by the ssrA gene; the 2 termini fold to resemble tRNA(Ala) and it encodes a 'tag peptide', a short internal open reading frame. During trans-translation Ala-aminoacylated tmRNA acts like a tRNA, entering the A-site of stalled ribosomes, displacing the stalled mRNA. The ribosome then switches to translate the ORF on the tmRNA; the nascent peptide is terminated with the 'tag peptide' encoded by the tmRNA and targeted for degradation. The ribosome is freed to recommence translation, which seems to be the essential function of trans-translation. In Dehalococcoides mccartyi (strain ATCC BAA-2100 / JCM 16839 / KCTC 5957 / BAV1), this protein is SsrA-binding protein.